We begin with the raw amino-acid sequence, 33 residues long: uncharacterized protein (33 aa).

Residues Leu-11–Phe-31 traverse the membrane as a helical segment.

Its subcellular location is the membrane. This is an uncharacterized protein from Saccharomyces cerevisiae (strain ATCC 204508 / S288c) (Baker's yeast).